We begin with the raw amino-acid sequence, 379 residues long: 3-dehydroquinate synthase (379 aa).

Residues Ser-67–Lys-72, Gly-101–Asp-105, Thr-125–Thr-126, Lys-138, and Lys-147 each bind NAD(+). Glu-180, His-242, and His-258 together coordinate Zn(2+).

This sequence belongs to the sugar phosphate cyclases superfamily. Dehydroquinate synthase family. NAD(+) is required as a cofactor. Requires Co(2+) as cofactor. Zn(2+) serves as cofactor.

It is found in the cytoplasm. The catalysed reaction is 7-phospho-2-dehydro-3-deoxy-D-arabino-heptonate = 3-dehydroquinate + phosphate. The protein operates within metabolic intermediate biosynthesis; chorismate biosynthesis; chorismate from D-erythrose 4-phosphate and phosphoenolpyruvate: step 2/7. Its function is as follows. Catalyzes the conversion of 3-deoxy-D-arabino-heptulosonate 7-phosphate (DAHP) to dehydroquinate (DHQ). The chain is 3-dehydroquinate synthase from Chlamydia abortus (strain DSM 27085 / S26/3) (Chlamydophila abortus).